Here is a 387-residue protein sequence, read N- to C-terminus: MRYLTAGESHGPGLTVIIEGAPAGLAIDISQINAELKKRQSGYGRGRRMQIESDQVEVRSGIRHGVTTGAPITFWIENKDHTHWKHVMQAEPIESDIEVKRRVSRPRPGHADLVGGMKYDHRDLRDVLERSSARETAARVAVGAFCKQLLQQVGVSLFSYVKVIGGERAESRTFDSLQEAQAVVDASPVRTLDEAAALRMMRRIDEAKANGDSIGGIVCTEVHGVVPGLGSYVQYDRKLDAKIAQAVMSVNAFKGVEFGEGFEMAYRPGSEVMDPIAYGDNGYTRLSNHLGGFEGGMTTGMPILCSAVMKPIPTLYKPLQSVDIDTKEAFLAQIERSDSCAVPAASLVVEAVIAFEIAKEMCETFGHDTMERIKHRVDEYREELRVW.

Positions 39 and 45 each coordinate NADP(+). FMN is bound by residues 130–132 (RSS), 251–252 (NA), glycine 295, 310–314 (KPIPT), and arginine 336.

It belongs to the chorismate synthase family. As to quaternary structure, homotetramer. Requires FMNH2 as cofactor.

The enzyme catalyses 5-O-(1-carboxyvinyl)-3-phosphoshikimate = chorismate + phosphate. It participates in metabolic intermediate biosynthesis; chorismate biosynthesis; chorismate from D-erythrose 4-phosphate and phosphoenolpyruvate: step 7/7. Catalyzes the anti-1,4-elimination of the C-3 phosphate and the C-6 proR hydrogen from 5-enolpyruvylshikimate-3-phosphate (EPSP) to yield chorismate, which is the branch point compound that serves as the starting substrate for the three terminal pathways of aromatic amino acid biosynthesis. This reaction introduces a second double bond into the aromatic ring system. This is Chorismate synthase from Exiguobacterium sp. (strain ATCC BAA-1283 / AT1b).